Here is a 904-residue protein sequence, read N- to C-terminus: Alanine--tRNA ligase (904 aa).

Residues His-594, His-598, Cys-695, and His-699 each coordinate Zn(2+).

Belongs to the class-II aminoacyl-tRNA synthetase family. Zn(2+) serves as cofactor.

The protein localises to the cytoplasm. The catalysed reaction is tRNA(Ala) + L-alanine + ATP = L-alanyl-tRNA(Ala) + AMP + diphosphate. Functionally, catalyzes the attachment of alanine to tRNA(Ala) in a two-step reaction: alanine is first activated by ATP to form Ala-AMP and then transferred to the acceptor end of tRNA(Ala). Also edits incorrectly charged Ser-tRNA(Ala) and Gly-tRNA(Ala) via its editing domain. The chain is Alanine--tRNA ligase from Anaeromyxobacter sp. (strain Fw109-5).